The primary structure comprises 283 residues: Phosphatidylserine decarboxylase proenzyme (283 aa).

Active-site charge relay system; for autoendoproteolytic cleavage activity residues include Asp-89, His-146, and Ser-249. Residue Ser-249 is the Schiff-base intermediate with substrate; via pyruvic acid; for decarboxylase activity of the active site. The residue at position 249 (Ser-249) is a Pyruvic acid (Ser); by autocatalysis.

The protein belongs to the phosphatidylserine decarboxylase family. PSD-B subfamily. Prokaryotic type I sub-subfamily. As to quaternary structure, heterodimer of a large membrane-associated beta subunit and a small pyruvoyl-containing alpha subunit. The cofactor is pyruvate. Post-translationally, is synthesized initially as an inactive proenzyme. Formation of the active enzyme involves a self-maturation process in which the active site pyruvoyl group is generated from an internal serine residue via an autocatalytic post-translational modification. Two non-identical subunits are generated from the proenzyme in this reaction, and the pyruvate is formed at the N-terminus of the alpha chain, which is derived from the carboxyl end of the proenzyme. The autoendoproteolytic cleavage occurs by a canonical serine protease mechanism, in which the side chain hydroxyl group of the serine supplies its oxygen atom to form the C-terminus of the beta chain, while the remainder of the serine residue undergoes an oxidative deamination to produce ammonia and the pyruvoyl prosthetic group on the alpha chain. During this reaction, the Ser that is part of the protease active site of the proenzyme becomes the pyruvoyl prosthetic group, which constitutes an essential element of the active site of the mature decarboxylase.

It localises to the cell membrane. It carries out the reaction a 1,2-diacyl-sn-glycero-3-phospho-L-serine + H(+) = a 1,2-diacyl-sn-glycero-3-phosphoethanolamine + CO2. Its pathway is phospholipid metabolism; phosphatidylethanolamine biosynthesis; phosphatidylethanolamine from CDP-diacylglycerol: step 2/2. Its function is as follows. Catalyzes the formation of phosphatidylethanolamine (PtdEtn) from phosphatidylserine (PtdSer). The sequence is that of Phosphatidylserine decarboxylase proenzyme from Legionella pneumophila (strain Corby).